The primary structure comprises 490 residues: Cardiolipin synthase 1 (490 aa).

2 helical membrane passes run 9–29 (ILTI…FVII) and 42–62 (WAWL…YLFL). 2 consecutive PLD phosphodiesterase domains span residues 225 to 252 (MNNR…GDDY) and 403 to 430 (QNGF…DFRS). Active-site residues include His230, Lys232, Asp237, His408, Lys410, and Asp415.

This sequence belongs to the phospholipase D family. Cardiolipin synthase subfamily.

It is found in the cell membrane. The enzyme catalyses 2 a 1,2-diacyl-sn-glycero-3-phospho-(1'-sn-glycerol) = a cardiolipin + glycerol. Its function is as follows. Catalyzes the reversible phosphatidyl group transfer from one phosphatidylglycerol molecule to another to form cardiolipin (CL) (diphosphatidylglycerol) and glycerol. This Staphylococcus epidermidis (strain ATCC 35984 / DSM 28319 / BCRC 17069 / CCUG 31568 / BM 3577 / RP62A) protein is Cardiolipin synthase 1 (cls1).